The primary structure comprises 357 residues: Sulfate/thiosulfate import ATP-binding protein CysA (357 aa).

One can recognise an ABC transporter domain in the interval 3 to 237 (IQIQGVSKQY…PASPFVYDFL (235 aa)). 35-42 (GPSGSGKT) provides a ligand contact to ATP.

It belongs to the ABC transporter superfamily. Sulfate/tungstate importer (TC 3.A.1.6) family. As to quaternary structure, the complex is composed of two ATP-binding proteins (CysA), two transmembrane proteins (CysT and CysW) and a solute-binding protein (CysP).

Its subcellular location is the cell membrane. The enzyme catalyses sulfate(out) + ATP + H2O = sulfate(in) + ADP + phosphate + H(+). It catalyses the reaction thiosulfate(out) + ATP + H2O = thiosulfate(in) + ADP + phosphate + H(+). Its function is as follows. Part of the ABC transporter complex CysAWTP involved in sulfate/thiosulfate import. Responsible for energy coupling to the transport system. The chain is Sulfate/thiosulfate import ATP-binding protein CysA from Bacillus cereus (strain ATCC 14579 / DSM 31 / CCUG 7414 / JCM 2152 / NBRC 15305 / NCIMB 9373 / NCTC 2599 / NRRL B-3711).